We begin with the raw amino-acid sequence, 838 residues long: Protein translocase subunit SecA (838 aa).

ATP is bound by residues Q86, 104–108, and D493; that span reads GEGKT. Disordered stretches follow at residues 517-536 and 789-838; these read RRIDNQLRGRSGRQGDPGSS and KVAE…CCGQ. The span at 801–819 shows a compositional bias: basic and acidic residues; it reads TDGDSKAKRQPVRKKETVG. Residues C824, C826, C835, and C836 each coordinate Zn(2+).

The protein belongs to the SecA family. In terms of assembly, monomer and homodimer. Part of the essential Sec protein translocation apparatus which comprises SecA, SecYEG and auxiliary proteins SecDF. Other proteins may also be involved. It depends on Zn(2+) as a cofactor.

The protein localises to the cell membrane. The protein resides in the cytoplasm. The catalysed reaction is ATP + H2O + cellular proteinSide 1 = ADP + phosphate + cellular proteinSide 2.. Part of the Sec protein translocase complex. Interacts with the SecYEG preprotein conducting channel. Has a central role in coupling the hydrolysis of ATP to the transfer of proteins into and across the cell membrane, serving as an ATP-driven molecular motor driving the stepwise translocation of polypeptide chains across the membrane. This Halalkalibacterium halodurans (strain ATCC BAA-125 / DSM 18197 / FERM 7344 / JCM 9153 / C-125) (Bacillus halodurans) protein is Protein translocase subunit SecA.